A 449-amino-acid chain; its full sequence is uncharacterized protein (449 aa).

A compositionally biased stretch (acidic residues) spans 1 to 11 (MLDAPEQDPVD). The tract at residues 1–33 (MLDAPEQDPVDPGDPASPPHGEAEQPLPGPRWP) is disordered. The helical transmembrane segment at 45-65 (LLLTALGGLLIAGLVTAIPAV) threads the bilayer. The tract at residues 349–449 (QPPVPPPDIP…PGPAEPAPAG (101 aa)) is disordered. Over residues 365-387 (PPIPLQLPTPRPAPPAQQLPSTP) the composition is skewed to pro residues. A compositionally biased stretch (low complexity) spans 409-418 (HAPASAAPAE). A compositionally biased stretch (pro residues) spans 437-449 (ATPPGPAEPAPAG).

The protein localises to the cell membrane. Its subcellular location is the secreted. In terms of biological role, may play a role in septum formation. This is an uncharacterized protein from Mycobacterium tuberculosis (strain CDC 1551 / Oshkosh).